Reading from the N-terminus, the 214-residue chain is Large ribosomal subunit protein uL16 (214 aa).

The residue at position 32 (Arg32) is a Citrulline. Lys175 participates in a covalent cross-link: Glycyl lysine isopeptide (Lys-Gly) (interchain with G-Cter in SUMO2). Residue Lys188 forms a Glycyl lysine isopeptide (Lys-Gly) (interchain with G-Cter in ubiquitin) linkage.

It belongs to the universal ribosomal protein uL16 family. Component of the large ribosomal subunit. Mature ribosomes consist of a small (40S) and a large (60S) subunit. The 40S subunit contains about 33 different proteins and 1 molecule of RNA (18S). The 60S subunit contains about 49 different proteins and 3 molecules of RNA (28S, 5.8S and 5S). Post-translationally, citrullinated by PADI4. In terms of processing, ufmylated by UFL1.

The protein localises to the cytoplasm. In terms of biological role, component of the large ribosomal subunit. Plays a role in the formation of actively translating ribosomes. May play a role in the embryonic brain development. The chain is Large ribosomal subunit protein uL16 from Rattus norvegicus (Rat).